Here is a 726-residue protein sequence, read N- to C-terminus: PWWP domain-containing protein 2 (726 aa).

The span at 1-10 (MSTESERIES) shows a compositional bias: basic and acidic residues. Residues 1 to 26 (MSTESERIESVSEANASSLEVGNDQM) form a disordered region. Polar residues predominate over residues 12-26 (SEANASSLEVGNDQM). The region spanning 199-260 (DSDLVWAKVR…ASRIKPFRQH (62 aa)) is the PWWP domain. Residues 392 to 441 (APKISPAEEQSSLVEVSDPEPTKSKQVYTKRRKTNLQTEQSSLVEVSDPD) are disordered. The span at 426–435 (NLQTEQSSLV) shows a compositional bias: polar residues. 2 consecutive short sequence motifs (nuclear localization signal) follow at residues 460 to 467 (KKKEKTLA) and 495 to 502 (KKRKVVQS). 2 disordered regions span residues 472–545 (EKRV…PQKA) and 568–726 (TRLL…VSAE). Residues 494-512 (EKKRKVVQSKVPKSTKKIK) are compositionally biased toward basic residues. Over residues 606-634 (SPSTTLSSPHAASVTKTTSGKSNSVSLDH) the composition is skewed to polar residues. The segment covering 658–688 (LESRDLKDSSKEQVVHEDKKEAANVADEKSI) has biased composition (basic and acidic residues).

Belongs to the PDP family. In terms of assembly, interacts with DEK3. Binds to MSI4/FVE and MSI5. Component of the PRC2 (polycomb repressive complex 2) complex which regulates histone methylation on histone H3K27.

It localises to the nucleus. In terms of biological role, together with PDP1, PDP3 and PDP6, interacts with MSI4/FVE and MSI5 to suppress FLC, MAF4 and MAF5 expression by regulating the function of the PRC2 complex and modulating H3K27me3 level, thereby promoting flowering. The polypeptide is PWWP domain-containing protein 2 (Arabidopsis thaliana (Mouse-ear cress)).